Here is a 197-residue protein sequence, read N- to C-terminus: Nucleoside triphosphate pyrophosphatase (197 aa).

Catalysis depends on aspartate 71, which acts as the Proton acceptor.

This sequence belongs to the Maf family. The cofactor is a divalent metal cation.

Its subcellular location is the cytoplasm. The catalysed reaction is a ribonucleoside 5'-triphosphate + H2O = a ribonucleoside 5'-phosphate + diphosphate + H(+). It carries out the reaction a 2'-deoxyribonucleoside 5'-triphosphate + H2O = a 2'-deoxyribonucleoside 5'-phosphate + diphosphate + H(+). In terms of biological role, nucleoside triphosphate pyrophosphatase. May have a dual role in cell division arrest and in preventing the incorporation of modified nucleotides into cellular nucleic acids. The polypeptide is Nucleoside triphosphate pyrophosphatase (Synechococcus sp. (strain JA-3-3Ab) (Cyanobacteria bacterium Yellowstone A-Prime)).